The sequence spans 326 residues: MADGGGGGEAGSGGSAPVCSFVRKPPKNIRKRPTAPAGSDDDDEDGSGAIAAARAKKAPSSTSKLFFSSADGSSEPRRFQYESSRTIQASTDSRATATLETETEFDRDARAIRERQLKQAEESLKKNPSAPASSSGSGSGEVYKGIHGYTDYKAGFRREHTVSSEKAGGSHGPLRASAHIRLSARFDYQPDICKDYKETGYCGYGDSCKFMHDRGDYKSGWQIEKEWEEAEKARKRRIAMGGDGSDYEAGEEDDDDDEEALPFACYICREPFVDPVVTKCKHYFCEHCALKHHSKNKKCFVCNKPTLGIFNAAQEIRKKMAQDKKQ.

The span at 1 to 14 shows a compositional bias: gly residues; it reads MADGGGGGEAGSGG. The disordered stretch occupies residues 1 to 142; that stretch reads MADGGGGGEA…SSSGSGSGEV (142 aa). A compositionally biased stretch (basic residues) spans 24–33; that stretch reads KPPKNIRKRP. Positions 47–64 are enriched in low complexity; that stretch reads SGAIAAARAKKAPSSTSK. A compositionally biased stretch (polar residues) spans 81-100; the sequence is YESSRTIQASTDSRATATLE. Positions 104 to 125 are enriched in basic and acidic residues; it reads EFDRDARAIRERQLKQAEESLK. Residues 187–215 form a C3H1-type zinc finger; it reads DYQPDICKDYKETGYCGYGDSCKFMHDRG. The RING-type zinc-finger motif lies at 265-303; sequence CYICREPFVDPVVTKCKHYFCEHCALKHHSKNKKCFVCN.

In Oryza sativa subsp. japonica (Rice), this protein is Zinc finger CCCH domain-containing protein 15.